The primary structure comprises 167 residues: NADH-quinone oxidoreductase subunit B 2 (167 aa).

[4Fe-4S] cluster contacts are provided by Cys-39, Cys-40, Cys-104, and Cys-134.

Belongs to the complex I 20 kDa subunit family. As to quaternary structure, NDH-1 is composed of 14 different subunits. Subunits NuoB, C, D, E, F, and G constitute the peripheral sector of the complex. [4Fe-4S] cluster serves as cofactor.

Its subcellular location is the cell inner membrane. The catalysed reaction is a quinone + NADH + 5 H(+)(in) = a quinol + NAD(+) + 4 H(+)(out). NDH-1 shuttles electrons from NADH, via FMN and iron-sulfur (Fe-S) centers, to quinones in the respiratory chain. Couples the redox reaction to proton translocation (for every two electrons transferred, four hydrogen ions are translocated across the cytoplasmic membrane), and thus conserves the redox energy in a proton gradient. The chain is NADH-quinone oxidoreductase subunit B 2 from Burkholderia mallei (strain NCTC 10247).